Here is a 347-residue protein sequence, read N- to C-terminus: Nuclear distribution protein nudE-like 1 (347 aa).

Residues 28–190 (QSFQEARDEL…LAVRERQQEV (163 aa)) adopt a coiled-coil conformation. Residues 56–166 (VQAEQRNRDL…LDEKESLLVS (111 aa)) form a self-association region. Residues 64–189 (DLQADNQRLK…ELAVRERQQE (126 aa)) form an interaction with KATNB1 region. The required for interaction with PAFAH1B1 stretch occupies residues 114–133 (YVRELEQANDDLERAKRATI). Positions 175-347 (RDLRQELAVR…SAPGMLPLSV (173 aa)) are interaction with CENPF. The segment at 189-256 (EVTRKSAPSS…SARISALNIV (68 aa)) is interaction with YWHAE. Residues 191–347 (TRKSAPSSPT…SAPGMLPLSV (157 aa)) are interaction with NEFL. The tract at residues 195-256 (APSSPTLDCE…SARISALNIV (62 aa)) is interaction with KATNA1. At Ser-215 the chain carries Phosphoserine. A Phosphothreonine; by CDK1 and MAPK1 modification is found at Thr-219. Ser-231 bears the Phosphoserine mark. The interval 241 to 280 (TSPLTPSARISALNIVGDLLRKVGALESKLAACRNFAKDQ) is interaction with DISC1. Phosphoserine; by CDK1 is present on Ser-242. The residue at position 245 (Thr-245) is a Phosphothreonine; by CDK1 and MAPK1. Residues 256–291 (VGDLLRKVGALESKLAACRNFAKDQASRKSYISGNV) form a required for localization to the centrosome and interaction with dynein, dynactin, tubulin gamma, PCM1 and PCNT region. Cys-273 carries the S-palmitoyl cysteine; by ZDHHC2, ZDHHC3 and ZDHHC7 lipid modification. The interval 314–347 (KGAVNGFDPAPPPPDPGLGSSRPSSAPGMLPLSV) is disordered. A Phosphoserine modification is found at Ser-346.

This sequence belongs to the nudE family. Self-associates. Interacts with DISC1, dynein, dynactin, tubulin gamma, KATNA1, KATNB1, microtubules, PAFAH1B1, PCM1, PCNT, and YWHAE. Interacts directly with NEFL and indirectly with NEFH. Interacts (via C-terminus) with CENPF. Interacts with ZNF365. Interacts with PLEKHM1 (via N- and C-terminus). Interacts with GTP-bound RAB9A; the interaction may lead to RAB9A-dynein motor tethering. Post-translationally, phosphorylated in mitosis. Can be phosphorylated by CDK1, CDK5 and MAPK1. Phosphorylation by CDK5 promotes interaction with KATNA1 and YWHAE. Palmitoylation at Cys-273 reduces affinity for dynein.

It localises to the cytoplasm. Its subcellular location is the cytoskeleton. The protein localises to the microtubule organizing center. The protein resides in the centrosome. It is found in the chromosome. It localises to the centromere. Its subcellular location is the kinetochore. The protein localises to the spindle. Required for organization of the cellular microtubule array and microtubule anchoring at the centrosome. May regulate microtubule organization at least in part by targeting the microtubule severing protein KATNA1 to the centrosome. Also positively regulates the activity of the minus-end directed microtubule motor protein dynein. May enhance dynein-mediated microtubule sliding by targeting dynein to the microtubule plus ends. Required for several dynein- and microtubule-dependent processes such as the maintenance of Golgi integrity, the centripetal motion of secretory vesicles and the coupling of the nucleus and centrosome. Also required during brain development for the migration of newly formed neurons from the ventricular/subventricular zone toward the cortical plate. Required for mitosis in some cell types but appears to be dispensible for mitosis in cortical neuronal progenitors, which instead requires NDE1. Facilitates the polymerization of neurofilaments from the individual subunits NEFH and NEFL. Positively regulates lysosome peripheral distribution and ruffled border formation in osteoclasts. Plays a role, together with DISC1, in the regulation of neurite outgrowth. May act as a RAB9A/B effector that tethers RAB9-associated late endosomes to the dynein motor for their retrograde transport to the trans-Golgi network. The polypeptide is Nuclear distribution protein nudE-like 1 (NDEL1) (Macaca fascicularis (Crab-eating macaque)).